A 242-amino-acid polypeptide reads, in one-letter code: Phosphatidylcholine synthase (242 aa).

The Cytoplasmic portion of the chain corresponds to 1–15 (MKIFNYKRVPYAEMR). A helical transmembrane segment spans residues 16–36 (AFSVHILTASGSFLAFLGVVA). The Periplasmic portion of the chain corresponds to 37 to 41 (AAEHR). Residues 42–62 (FIDMFWWLGLALLVDGIDGPI) form a helical membrane-spanning segment. Residues 63–76 (ARKVRVKEVLPNWS) are Cytoplasmic-facing. A helical membrane pass occupies residues 77–97 (GDTLDNIIDYVTYVLLPAFAL). Residues 98-100 (YQS) are Periplasmic-facing. A helical transmembrane segment spans residues 101–121 (GMIGEPWSFVAAGMIVVSSAI). The Cytoplasmic portion of the chain corresponds to 122–133 (YYADMGMKTDEY). The chain crosses the membrane as a helical span at residues 134–154 (FFSGFPVVWNMIVFTLFVIDA). Over 155–159 (SATTA) the chain is Periplasmic. A helical transmembrane segment spans residues 160-180 (LTVVIVSVVLTFLPINFLHPV). At 181 to 187 (RVKRLRP) the chain is on the cytoplasmic side. A helical transmembrane segment spans residues 188 to 208 (LNLGVFFLWSALGIFSLLMHF). Over 209–214 (DTPEWA) the chain is Periplasmic. The chain crosses the membrane as a helical span at residues 215-235 (LILFIVTGAYLYVIGAVLQFF). The Cytoplasmic segment spans residues 236-242 (PALGRET).

The protein belongs to the CDP-alcohol phosphatidyltransferase class-I family. Requires Mn(2+) as cofactor.

The protein resides in the cell inner membrane. The enzyme catalyses a CDP-1,2-diacyl-sn-glycerol + choline = a 1,2-diacyl-sn-glycero-3-phosphocholine + CMP + H(+). In terms of biological role, condenses choline with CDP-diglyceride to produce phosphatidylcholine and CMP. The sequence is that of Phosphatidylcholine synthase from Rhizobium johnstonii (strain DSM 114642 / LMG 32736 / 3841) (Rhizobium leguminosarum bv. viciae).